The primary structure comprises 252 residues: Neurexophilin-3 (252 aa).

Positions 1–22 (MQLTRCCFVFLVQGSLYLVICG) are cleaved as a signal peptide. The interval 23 to 75 (QDDGPPGSEDPEHDDHEGQPRPRVPRKRGHISPKSRPLANSTLLGLLAPPGEV) is II. The tract at residues 27-59 (PPGSEDPEHDDHEGQPRPRVPRKRGHISPKSRP) is disordered. Basic residues predominate over residues 45-55 (RVPRKRGHISP). N-linked (GlcNAc...) asparagine glycans are attached at residues Asn62, Asn127, Asn137, and Asn143. The interval 76 to 157 (WGVLGQPPNR…LVPPSKAVEF (82 aa)) is III. The interval 158–166 (HQEQQIFIE) is IV (linker domain). Positions 167 to 252 (AKASKIFNCR…HSDTPYYPSG (86 aa)) are v (Cys-rich).

Belongs to the neurexophilin family. In terms of processing, may be proteolytically processed at the boundary between the N-terminal non-conserved and the central conserved domain in neuron-like cells. Highest level in brain, present also in lung, kidney and testis.

The protein localises to the secreted. Its function is as follows. May be signaling molecules that resemble neuropeptides. Ligand for alpha-neurexins. This Mus musculus (Mouse) protein is Neurexophilin-3 (Nxph3).